The chain runs to 637 residues: MMPFPVTTQGPPQPAPPPNRYGVSSPISLAVPKETDCLLTQRLIETLRPFGVFEEEEELQRRILVLEKLNNLVKEWIREISESKSLPQSVIENVGGKIFTFGSYRLGVHTKGADIDALCVAPSHVDRSDFFTSFYAKLKLQEEVKDLRAVEEAFVPVIKLCFDGIEIDILFARLALQTIPEDLDLRDDSLLKNLDIRCIRSLNGCRVTDEILHLVPNIDNFRLTLRAIKLWAKCHNIYSNILGFLGGVSWAMLVARTCQLYPNAVASTLVRKFFLVFSEWEWPNPVLLKEPEERNLNLPVWDPRVNPSDRYHLMPIITPAYPQQNSTYNVSISTRMVMIEEFKQGLAITHEILLSKAEWSKLFEAPSFFQKYKHYIVLLASASTEKQHLEWVGLVESKIRILVGSLEKNEFITLAHVNPQSFPAPKENPDMEEFRTMWVIGLGLKKPDNSEILSIDLTYDIQSFTDTVYRQAVNSKMFEMGMKITAMHLRRKELHQLLPHHVLQDKKAHSTEGRRLTDLNDSSFDLSAGCENSMSVPSSTSTMKTGPLISSSQGRNSPALAVMTASVANIQATEFSLQQVNTNESSGVALNESIPHAVSQPAISPSPKAMVARVVSSTCLISHPDLQETQQQTYLIL.

The segment covering 1 to 10 (MMPFPVTTQG) has biased composition (low complexity). The segment at 1-23 (MMPFPVTTQGPPQPAPPPNRYGV) is disordered. ATP-binding positions include 101–103 (FGS), Thr-110, 114–116 (DID), Asp-168, Lys-229, Tyr-238, and 247–248 (GV). 3 residues coordinate Mg(2+): Asp-114, Asp-116, and Asp-168. A disordered region spans residues 535 to 555 (SVPSSTSTMKTGPLISSSQGR).

This sequence belongs to the poly(A) polymerase family. As to quaternary structure, interacts with GSG1. It depends on Mg(2+) as a cofactor. Mn(2+) serves as cofactor. In terms of tissue distribution, testis specific.

Its subcellular location is the nucleus. The enzyme catalyses RNA(n) + ATP = RNA(n)-3'-adenine ribonucleotide + diphosphate. The chain is Poly(A) polymerase beta from Homo sapiens (Human).